The following is a 146-amino-acid chain: UPF0735 ACT domain-containing protein TTE2621 (146 aa).

Residues 71–146 (TFSMVLEHMP…GVRKIEVLGE (76 aa)) form the ACT domain.

It belongs to the UPF0735 family.

This chain is UPF0735 ACT domain-containing protein TTE2621, found in Caldanaerobacter subterraneus subsp. tengcongensis (strain DSM 15242 / JCM 11007 / NBRC 100824 / MB4) (Thermoanaerobacter tengcongensis).